The sequence spans 167 residues: NADH-ubiquinone oxidoreductase chain 6 (167 aa).

A run of 5 helical transmembrane segments spans residues 1-21 (MVLMVVFSVMFLISLIAVASN), 23-43 (SPYFAAFGLMVGAGVGCGMLM), 47-67 (MTFLSMILFLIYLGGMLVVFA), 86-106 (VFSYVLVYMFLVIVAWVAFVG), and 133-153 (AGGYMLFIAGWVLLMALLVVL).

Belongs to the complex I subunit 6 family.

The protein resides in the mitochondrion membrane. The catalysed reaction is a ubiquinone + NADH + 5 H(+)(in) = a ubiquinol + NAD(+) + 4 H(+)(out). Functionally, core subunit of the mitochondrial membrane respiratory chain NADH dehydrogenase (Complex I) that is believed to belong to the minimal assembly required for catalysis. Complex I functions in the transfer of electrons from NADH to the respiratory chain. The immediate electron acceptor for the enzyme is believed to be ubiquinone. This chain is NADH-ubiquinone oxidoreductase chain 6 (MT-ND6), found in Polypterus ornatipinnis (Ornate bichir).